The following is a 295-amino-acid chain: G1/S-specific cyclin-D1 (295 aa).

The region spanning 28–152 is the Cyclin N-terminal domain; it reads LRAMLKTEET…LLVNKLKWNL (125 aa). Lys-269 participates in a covalent cross-link: Glycyl lysine isopeptide (Lys-Gly) (interchain with G-Cter in ubiquitin). A disordered region spans residues 269–295; it reads KATEEEGEVEEEAGLACTPTDVRDVDI. Position 286 is a phosphothreonine (Thr-286).

This sequence belongs to the cyclin family. Cyclin D subfamily. Interacts with either CDK4 or CDK6 protein kinase to form a serine/threonine kinase holoenzyme complex. The cyclin subunit imparts substrate specificity to the complex. Component of the ternary complex CCND1/CDK4/CDKN1B required for nuclear translocation and modulation of CDK4-mediated kinase activity. Interacts directly with CDKN1B. Can form similar complexes with either CDKN1A or CDKN2A. Interacts with UHRF2; the interaction ubiquitinates CCND1 and appears to occur independently of phosphorylation. Interacts with USP2. Interacts (via cyclin N-terminal domain) with INSM1 (via N-terminal region); the interaction competes with the binding of CCND1 to CDK4 during cell cycle progression and inhibits CDK4 activity. Interacts with CDK4; the interaction is prevented with the binding of CCND1 to INSM1 during cell cycle progression. Post-translationally, phosphorylation at Thr-286 by MAP kinases is required for ubiquitination and degradation by the DCX(AMBRA1) complex. It also plays an essential role for recognition by the FBXO31 component of SCF (SKP1-cullin-F-box) protein ligase complex following DNA damage. Ubiquitinated at Lys-269 by the DCX(AMBRA1) complex during the transition from G1 to S cell phase, leading to its degradation: ubiquitination is dependent on Thr-286 phosphorylation. The DCX(AMBRA1) complex represents the major regulator of CCND1 stability during the G1/S transition. Also ubiquitinated by the SCF(FBXO4) and Cul7-RING(FBXW8) ubiquitin-protein ligase complexes. Following DNA damage it is ubiquitinated by the SCF(FBXO31) protein ligase complex. SCF(FBXO31) ubiquitination is dependent on Thr-286 phosphorylation. Ubiquitinated also by UHRF2 apparently in a phosphorylation-independent manner. Ubiquitination leads to its degradation and G1 arrest. Deubiquitinated by USP2; leading to its stabilization.

It is found in the nucleus. The protein resides in the cytoplasm. It localises to the nucleus membrane. In terms of biological role, regulatory component of the cyclin D1-CDK4 (DC) complex that phosphorylates and inhibits members of the retinoblastoma (RB) protein family including RB1 and regulates the cell-cycle during G(1)/S transition. Phosphorylation of RB1 allows dissociation of the transcription factor E2F from the RB/E2F complex and the subsequent transcription of E2F target genes which are responsible for the progression through the G(1) phase. Hypophosphorylates RB1 in early G(1) phase. Cyclin D-CDK4 complexes are major integrators of various mitogenenic and antimitogenic signals. Also a substrate for SMAD3, phosphorylating SMAD3 in a cell-cycle-dependent manner and repressing its transcriptional activity. Component of the ternary complex, cyclin D1/CDK4/CDKN1B, required for nuclear translocation and activity of the cyclin D-CDK4 complex. Exhibits transcriptional corepressor activity with INSM1 on the NEUROD1 and INS promoters in a cell cycle-independent manner. This Rattus norvegicus (Rat) protein is G1/S-specific cyclin-D1 (Ccnd1).